We begin with the raw amino-acid sequence, 504 residues long: Glutamate--tRNA ligase (504 aa).

Residues 14–24 carry the 'HIGH' region motif; it reads PSPTGYLHVGG. Residues 261–265 carry the 'KMSKS' region motif; the sequence is KLSKR. Lysine 264 contributes to the ATP binding site.

The protein belongs to the class-I aminoacyl-tRNA synthetase family. Glutamate--tRNA ligase type 1 subfamily. Monomer.

The protein localises to the cytoplasm. The catalysed reaction is tRNA(Glu) + L-glutamate + ATP = L-glutamyl-tRNA(Glu) + AMP + diphosphate. Catalyzes the attachment of glutamate to tRNA(Glu) in a two-step reaction: glutamate is first activated by ATP to form Glu-AMP and then transferred to the acceptor end of tRNA(Glu). The sequence is that of Glutamate--tRNA ligase from Chlorobium luteolum (strain DSM 273 / BCRC 81028 / 2530) (Pelodictyon luteolum).